A 214-amino-acid chain; its full sequence is MTIGIVGRKTGMTRVFTDDGVSIPVTVIEVEPNRVTQVKTADTDGYSAVQITVGERRASRVTKSEAGHFAKANVEAGRSVWELRNNSQEAFEVGASLTVEAFSAGQFIDVTGTSKGKGYAGTVKRWNFGMQDATHGNSRSHRVPGSTGQCQSPGRVFKNKKMTGHMGAERVTVQNLEIVRVDAERNLLLVKGAIPGAPGGDVIVRPAVKARTNA.

Residues 133 to 155 are disordered; that stretch reads ATHGNSRSHRVPGSTGQCQSPGR. N5-methylglutamine is present on Gln-151.

It belongs to the universal ribosomal protein uL3 family. As to quaternary structure, part of the 50S ribosomal subunit. Forms a cluster with proteins L14 and L19. Post-translationally, methylated by PrmB.

Its function is as follows. One of the primary rRNA binding proteins, it binds directly near the 3'-end of the 23S rRNA, where it nucleates assembly of the 50S subunit. This is Large ribosomal subunit protein uL3 from Cellvibrio japonicus (strain Ueda107) (Pseudomonas fluorescens subsp. cellulosa).